The chain runs to 1390 residues: DNA-directed RNA polymerase III subunit RPC1 (1390 aa).

Residues C69, C72, C79, H82, C109, and C112 each contribute to the Zn(2+) site. Residue K144 coordinates DNA. The Zn(2+) site is built by C156 and C159. Residues K167, S326, K348, R353, R360, and R366 each coordinate DNA. K445 is subject to N6-acetyllysine. R464 serves as a coordination point for RNA. Positions 499, 501, and 503 each coordinate Mg(2+). D503 serves as a coordination point for RNA. The tract at residues 843–884 (TPTEFFFHTMAGREGLVDTAVKTAETGYMQRRLVKSLEDLCS) is bridging helix. Positions 1029–1070 (PGSAVGALCAQSIGEPGTQMTLKTFHFAGVASMNITLGVPRI) are trigger loop. R1159, R1305, and K1323 together coordinate DNA.

The protein belongs to the RNA polymerase beta' chain family. In terms of assembly, component of the RNA polymerase III (Pol III) (Pol III) complex consisting of 17 subunits: a ten-subunit catalytic core composed of POLR3A/RPC1, POLR3B/RPC2, POLR1C/RPAC1, POLR1D/RPAC2, POLR3K/RPC10, POLR2E/RPABC1, POLR2F/RPABC2, POLR2H/RPABC3, POLR2K/RPABC4 and POLR2L/RPABC5; a mobile stalk composed of two subunits POLR3H/RPC8 and CRCP/RPC9, protruding from the core and functioning primarily in transcription initiation; and additional subunits homologous to general transcription factors of the RNA polymerase II machinery, POLR3C/RPC3-POLR3F/RPC6-POLR3G/RPC7 heterotrimer required for transcription initiation and POLR3D/RPC4-POLR3E/RPC5 heterodimer involved in both transcription initiation and termination. Pol III exists as two alternative complexes defined by the mutually exclusive incorporation of subunit POLR3G/RPC7alpha or POLR3GL/RPC7beta. The presence of POLR3G/RPC7alpha or POLR3GL/RPC7beta differentially modulates the transcription potential of Pol III, with POLR3G/RPC7alpha specifically associated with transcription of snaR-A non-coding RNAs. As part of the RNA polymerase III complex, interacts with PKP2. Requires Mg(2+) as cofactor. In terms of tissue distribution, expressed in the brain, in the cortex and the white matter (at protein level).

It is found in the nucleus. The protein resides in the cytoplasm. It localises to the cytosol. The enzyme catalyses RNA(n) + a ribonucleoside 5'-triphosphate = RNA(n+1) + diphosphate. Catalytic core component of RNA polymerase III (Pol III), a DNA-dependent RNA polymerase which synthesizes small non-coding RNAs using the four ribonucleoside triphosphates as substrates. Synthesizes 5S rRNA, snRNAs, tRNAs and miRNAs from at least 500 distinct genomic loci. Pol III-mediated transcription cycle proceeds through transcription initiation, transcription elongation and transcription termination stages. During transcription initiation, Pol III is recruited to DNA promoters type I, II or III with the help of general transcription factors and other specific initiation factors. Once the polymerase has escaped from the promoter it enters the elongation phase during which RNA is actively polymerized, based on complementarity with the template DNA strand. Transcription termination involves the release of the RNA transcript and polymerase from the DNA. Forms Pol III active center together with the second largest subunit POLR3B/RPC2. Appends one nucleotide at a time to the 3' end of the nascent RNA, with POLR3A/RPC1 contributing a Mg(2+)-coordinating DxDGD motif, and POLR3B/RPC2 participating in the coordination of a second Mg(2+) ion and providing lysine residues believed to facilitate Watson-Crick base pairing between the incoming nucleotide and template base. Typically, Mg(2+) ions direct a 5' nucleoside triphosphate to form a phosphodiester bond with the 3' hydroxyl of the preceding nucleotide of the nascent RNA, with the elimination of pyrophosphate. Pol III plays a key role in sensing and limiting infection by intracellular bacteria and DNA viruses. Acts as a nuclear and cytosolic DNA sensor involved in innate immune response. Can sense non-self dsDNA that serves as template for transcription into dsRNA. The non-self RNA polymerase III transcripts, such as Epstein-Barr virus-encoded RNAs (EBERs) induce type I interferon and NF-kappa-B through the RIG-I pathway. This Homo sapiens (Human) protein is DNA-directed RNA polymerase III subunit RPC1.